Consider the following 29-residue polypeptide: MDILALGWVSVLALFTWSIAMVVWGRNGF.

The helical transmembrane segment at 3–23 (ILALGWVSVLALFTWSIAMVV) threads the bilayer.

It belongs to the PetN family. In terms of assembly, the 4 large subunits of the cytochrome b6-f complex are cytochrome b6, subunit IV (17 kDa polypeptide, PetD), cytochrome f and the Rieske protein, while the 4 small subunits are PetG, PetL, PetM and PetN. The complex functions as a dimer.

It is found in the cellular thylakoid membrane. Functionally, component of the cytochrome b6-f complex, which mediates electron transfer between photosystem II (PSII) and photosystem I (PSI), cyclic electron flow around PSI, and state transitions. The sequence is that of Cytochrome b6-f complex subunit 8 from Gloeothece citriformis (strain PCC 7424) (Cyanothece sp. (strain PCC 7424)).